The sequence spans 243 residues: Adenosylcobinamide-GDP ribazoletransferase (243 aa).

Helical transmembrane passes span 8-28 (WLGAIAFYTCLPISPRWPIQL), 36-56 (PWVGLVLGGMLWGVQWLLDFL), 58-78 (VPSPVASAVLVALWLALTGGL), 107-127 (AGAFGVMAAMVILLLKVTSLS), 131-151 (KGSVLVWVLVLGRLAQVWAIA), 187-207 (FLLPLPLGQLLFGLLLILLIP), and 222-242 (YGAVVEWTEALLLVAFTVGSA).

It belongs to the CobS family. The cofactor is Mg(2+).

The protein localises to the cell inner membrane. The catalysed reaction is alpha-ribazole + adenosylcob(III)inamide-GDP = adenosylcob(III)alamin + GMP + H(+). It carries out the reaction alpha-ribazole 5'-phosphate + adenosylcob(III)inamide-GDP = adenosylcob(III)alamin 5'-phosphate + GMP + H(+). It participates in cofactor biosynthesis; adenosylcobalamin biosynthesis; adenosylcobalamin from cob(II)yrinate a,c-diamide: step 7/7. In terms of biological role, joins adenosylcobinamide-GDP and alpha-ribazole to generate adenosylcobalamin (Ado-cobalamin). Also synthesizes adenosylcobalamin 5'-phosphate from adenosylcobinamide-GDP and alpha-ribazole 5'-phosphate. The polypeptide is Adenosylcobinamide-GDP ribazoletransferase (Thermosynechococcus vestitus (strain NIES-2133 / IAM M-273 / BP-1)).